The following is a 131-amino-acid chain: Small ribosomal subunit protein uS8 (131 aa).

Belongs to the universal ribosomal protein uS8 family. In terms of assembly, part of the 30S ribosomal subunit. Contacts proteins S5 and S12.

Its function is as follows. One of the primary rRNA binding proteins, it binds directly to 16S rRNA central domain where it helps coordinate assembly of the platform of the 30S subunit. The sequence is that of Small ribosomal subunit protein uS8 from Chlorobium phaeobacteroides (strain DSM 266 / SMG 266 / 2430).